The following is an 88-amino-acid chain: Small ribosomal subunit protein bS20 (88 aa).

Residues 1 to 20 (MANIKQQKKRNKTNEKRRLR) are disordered.

It belongs to the bacterial ribosomal protein bS20 family.

Functionally, binds directly to 16S ribosomal RNA. In Phytoplasma australiense, this protein is Small ribosomal subunit protein bS20.